We begin with the raw amino-acid sequence, 275 residues long: Formamidopyrimidine-DNA glycosylase (275 aa).

Residue Pro2 is the Schiff-base intermediate with DNA of the active site. Residue Glu3 is the Proton donor of the active site. The active-site Proton donor; for beta-elimination activity is the Lys58. DNA is bound by residues His89, Arg108, and Lys151. The FPG-type; degenerate zinc-finger motif lies at Lys236–Lys275. Catalysis depends on Arg265, which acts as the Proton donor; for delta-elimination activity.

The protein belongs to the FPG family. As to quaternary structure, monomer. The cofactor is Zn(2+).

It catalyses the reaction Hydrolysis of DNA containing ring-opened 7-methylguanine residues, releasing 2,6-diamino-4-hydroxy-5-(N-methyl)formamidopyrimidine.. It carries out the reaction 2'-deoxyribonucleotide-(2'-deoxyribose 5'-phosphate)-2'-deoxyribonucleotide-DNA = a 3'-end 2'-deoxyribonucleotide-(2,3-dehydro-2,3-deoxyribose 5'-phosphate)-DNA + a 5'-end 5'-phospho-2'-deoxyribonucleoside-DNA + H(+). Functionally, involved in base excision repair of DNA damaged by oxidation or by mutagenic agents. Acts as a DNA glycosylase that recognizes and removes damaged bases. Has a preference for oxidized purines, such as 7,8-dihydro-8-oxoguanine (8-oxoG). Has AP (apurinic/apyrimidinic) lyase activity and introduces nicks in the DNA strand. Cleaves the DNA backbone by beta-delta elimination to generate a single-strand break at the site of the removed base with both 3'- and 5'-phosphates. This Acidiphilium cryptum (strain JF-5) protein is Formamidopyrimidine-DNA glycosylase.